The sequence spans 183 residues: uncharacterized protein (183 aa).

This is an uncharacterized protein from Archaeoglobus fulgidus (strain ATCC 49558 / DSM 4304 / JCM 9628 / NBRC 100126 / VC-16).